Reading from the N-terminus, the 362-residue chain is Class I histocompatibility antigen, Gogo-B*0103 alpha chain (362 aa).

The signal sequence occupies residues 1 to 24 (MRVTAPRTLLLLLSAALALTETWA). Residues 25–114 (GSHSMRYFDT…ALRYYNQSEA (90 aa)) form an alpha-1 region. Residues 25-308 (GSHSMRYFDT…EPSSQSTIPI (284 aa)) lie on the Extracellular side of the membrane. N-linked (GlcNAc...) asparagine glycosylation is present at asparagine 110. An alpha-2 region spans residues 115–206 (GSHTIQWMYG…ENGRETLQRA (92 aa)). Disulfide bonds link cysteine 125–cysteine 188 and cysteine 227–cysteine 283. The tract at residues 207 to 298 (DTPKTHVTHH…GLPKPLTLRW (92 aa)) is alpha-3. An Ig-like C1-type domain is found at 209-295 (PKTHVTHHPI…QHEGLPKPLT (87 aa)). The tract at residues 299–308 (EPSSQSTIPI) is connecting peptide. A helical membrane pass occupies residues 309–332 (VGIVAGLAVLAVVVIGAVVTAVIC). Residues 333–362 (RRKSSGGKGGSYSQAASSDSAQGSDVSLTA) are Cytoplasmic-facing. Residues 335-362 (KSSGGKGGSYSQAASSDSAQGSDVSLTA) are disordered. The span at 343 to 362 (SYSQAASSDSAQGSDVSLTA) shows a compositional bias: low complexity.

This sequence belongs to the MHC class I family. Heterodimer of an alpha chain and a beta chain (beta-2-microglobulin).

Its subcellular location is the membrane. Its function is as follows. Involved in the presentation of foreign antigens to the immune system. This Gorilla gorilla gorilla (Western lowland gorilla) protein is Class I histocompatibility antigen, Gogo-B*0103 alpha chain.